Consider the following 81-residue polypeptide: Photosystem I iron-sulfur center (81 aa).

2 consecutive 4Fe-4S ferredoxin-type domains span residues 2–31 and 39–68; these read AHSV…MVPR and IASA…VRVY. [4Fe-4S] cluster-binding residues include C11, C14, C17, C21, C48, C51, C54, and C58.

As to quaternary structure, the eukaryotic PSI reaction center is composed of at least 11 subunits. [4Fe-4S] cluster serves as cofactor.

It localises to the plastid. Its subcellular location is the chloroplast thylakoid membrane. It catalyses the reaction reduced [plastocyanin] + hnu + oxidized [2Fe-2S]-[ferredoxin] = oxidized [plastocyanin] + reduced [2Fe-2S]-[ferredoxin]. In terms of biological role, apoprotein for the two 4Fe-4S centers FA and FB of photosystem I (PSI); essential for photochemical activity. FB is the terminal electron acceptor of PSI, donating electrons to ferredoxin. The C-terminus interacts with PsaA/B/D and helps assemble the protein into the PSI complex. Required for binding of PsaD and PsaE to PSI. PSI is a plastocyanin/cytochrome c6-ferredoxin oxidoreductase, converting photonic excitation into a charge separation, which transfers an electron from the donor P700 chlorophyll pair to the spectroscopically characterized acceptors A0, A1, FX, FA and FB in turn. The protein is Photosystem I iron-sulfur center of Antithamnion sp. (Red alga).